The chain runs to 133 residues: Cytidine deaminase (133 aa).

A CMP/dCMP-type deaminase domain is found at valine 3 to tyrosine 131. Position 43 to 45 (asparagine 43 to glutamate 45) interacts with substrate. Zn(2+) is bound at residue cysteine 54. The active-site Proton donor is glutamate 56. Zn(2+) is bound by residues cysteine 89 and cysteine 92.

This sequence belongs to the cytidine and deoxycytidylate deaminase family. In terms of assembly, homodimer. It depends on Zn(2+) as a cofactor.

It catalyses the reaction cytidine + H2O + H(+) = uridine + NH4(+). It carries out the reaction 2'-deoxycytidine + H2O + H(+) = 2'-deoxyuridine + NH4(+). This enzyme scavenges exogenous and endogenous cytidine and 2'-deoxycytidine for UMP synthesis. This Mycoplasma pneumoniae (strain ATCC 29342 / M129 / Subtype 1) (Mycoplasmoides pneumoniae) protein is Cytidine deaminase (cdd).